We begin with the raw amino-acid sequence, 358 residues long: Methionine import ATP-binding protein MetN (358 aa).

The ABC transporter domain maps to 2–247 (ITTTGLTKVY…PGSELAHELF (246 aa)). Position 38 to 45 (38 to 45 (GQSGAGKS)) interacts with ATP.

This sequence belongs to the ABC transporter superfamily. Methionine importer (TC 3.A.1.24) family. In terms of assembly, the complex is composed of two ATP-binding proteins (MetN), two transmembrane proteins (MetI) and a solute-binding protein (MetQ).

It is found in the cell membrane. The catalysed reaction is L-methionine(out) + ATP + H2O = L-methionine(in) + ADP + phosphate + H(+). The enzyme catalyses D-methionine(out) + ATP + H2O = D-methionine(in) + ADP + phosphate + H(+). Part of the ABC transporter complex MetNIQ involved in methionine import. Responsible for energy coupling to the transport system. This is Methionine import ATP-binding protein MetN from Streptomyces griseus.